We begin with the raw amino-acid sequence, 249 residues long: DNA polymerase sliding clamp (249 aa).

The protein belongs to the PCNA family. In terms of assembly, homotrimer. The subunits circularize to form a toroid; DNA passes through its center. Replication factor C (RFC) is required to load the toroid on the DNA.

Its function is as follows. Sliding clamp subunit that acts as a moving platform for DNA processing. Responsible for tethering the catalytic subunit of DNA polymerase and other proteins to DNA during high-speed replication. The protein is DNA polymerase sliding clamp of Thermococcus onnurineus (strain NA1).